The chain runs to 302 residues: 4-hydroxy-tetrahydrodipicolinate synthase (302 aa).

T55 lines the pyruvate pocket. Y144 (proton donor/acceptor) is an active-site residue. Catalysis depends on K172, which acts as the Schiff-base intermediate with substrate. Residue V214 participates in pyruvate binding.

The protein belongs to the DapA family. Homotetramer; dimer of dimers.

It is found in the cytoplasm. The catalysed reaction is L-aspartate 4-semialdehyde + pyruvate = (2S,4S)-4-hydroxy-2,3,4,5-tetrahydrodipicolinate + H2O + H(+). It functions in the pathway amino-acid biosynthesis; L-lysine biosynthesis via DAP pathway; (S)-tetrahydrodipicolinate from L-aspartate: step 3/4. Functionally, catalyzes the condensation of (S)-aspartate-beta-semialdehyde [(S)-ASA] and pyruvate to 4-hydroxy-tetrahydrodipicolinate (HTPA). This is 4-hydroxy-tetrahydrodipicolinate synthase from Prochlorococcus marinus (strain MIT 9313).